Here is a 579-residue protein sequence, read N- to C-terminus: Zinc finger-containing ubiquitin peptidase 1 (579 aa).

A C2H2-type 1 zinc finger spans residues 2-25 (LSCDICGETVSSEPDMKAHLLIVH). The C2H2-type 2; atypical zinc finger occupies 30 to 53 (VICPFCKLSGVNYDEMCFHIETAH). 2 consecutive C2H2-type zinc fingers follow at residues 155–178 (PECP…KTKH) and 194–216 (YDCP…VDLH). The interval 227 to 249 (NRVQCSRDLELAQQLQQEEDRKR) is MIU. Positions 250–275 (RSEESRQEMEEFQKLQRQYGLDNSGG) are zUBD/ZHA. Lys263 is modified (N6-acetyllysine). The active-site Nucleophile is the Cys361. Residue His492 is the Proton acceptor of the active site. Asp513 is a catalytic residue.

It belongs to the peptidase C78 family. ZUFSP subfamily. Interacts with RPA1 and RPA2.

It localises to the cytoplasm. The protein localises to the nucleus. It catalyses the reaction Thiol-dependent hydrolysis of ester, thioester, amide, peptide and isopeptide bonds formed by the C-terminal Gly of ubiquitin (a 76-residue protein attached to proteins as an intracellular targeting signal).. In terms of biological role, deubiquitinase with endodeubiquitinase activity that specifically interacts with and cleaves 'Lys-63'-linked long polyubiquitin chains. Shows only weak activity against 'Lys-11' and 'Lys-48'-linked chains. Plays an important role in genome stability pathways, functioning to prevent spontaneous DNA damage and also promote cellular survival in response to exogenous DNA damage. Modulates the ubiquitination status of replication protein A (RPA) complex proteins in response to replication stress. The chain is Zinc finger-containing ubiquitin peptidase 1 from Bos taurus (Bovine).